The primary structure comprises 97 residues: YcgL domain-containing protein PputW619_3899 (97 aa).

Residues 3 to 87 (RICSIYKSPR…AEDEYIEHLP (85 aa)) enclose the YcgL domain.

The polypeptide is YcgL domain-containing protein PputW619_3899 (Pseudomonas putida (strain W619)).